We begin with the raw amino-acid sequence, 323 residues long: Olfactory receptor 6T1 (323 aa).

Topologically, residues 1-25 are extracellular; sequence MNPENWTQVTSFVLLGFPSSHLIQF. Residue asparagine 5 is glycosylated (N-linked (GlcNAc...) asparagine). The chain crosses the membrane as a helical span at residues 26–46; that stretch reads LVFLGLMVTYIVTATGKLLII. At 47 to 54 the chain is on the cytoplasmic side; sequence VLSWIDQR. Residues 55 to 75 form a helical membrane-spanning segment; sequence LHIQMYFFLRNFSFLELLLVT. The Extracellular portion of the chain corresponds to 76-99; sequence VVVPKMLVVILTGDHTISFVSCII. Cysteines 97 and 189 form a disulfide. A helical membrane pass occupies residues 100–120; it reads QSYLYFFLGTTDFFLLAVMSL. Over 121-139 the chain is Cytoplasmic; that stretch reads DRYLAICRPLRYETLMNGH. Residues 140–160 form a helical membrane-spanning segment; sequence VCSQLVLASWLAGFLWVLCPT. Residues 161–197 lie on the Extracellular side of the membrane; the sequence is VLMASLPFCGPNGIDHFFRDSWPLLRLSCGDTHLLKL. A helical membrane pass occupies residues 198–217; the sequence is VAFMLSTLVLLGSLALTSVS. The Cytoplasmic segment spans residues 218-237; the sequence is YACILATVLRAPTAAERRKA. Residues 238-258 traverse the membrane as a helical segment; that stretch reads FSTCASHLTVVVIIYGSSIFL. At 259–271 the chain is on the extracellular side; the sequence is YIRMSEAQSKLLN. The chain crosses the membrane as a helical span at residues 272 to 292; it reads KGASVLSCIITPLLNPFIFTL. The Cytoplasmic segment spans residues 293–323; sequence RNDKVQQALREALGWPRLTAVMKLRVTSQRK.

This sequence belongs to the G-protein coupled receptor 1 family.

It localises to the cell membrane. Its function is as follows. Odorant receptor. The sequence is that of Olfactory receptor 6T1 (OR6T1) from Homo sapiens (Human).